The primary structure comprises 675 residues: DNA ligase (675 aa).

NAD(+)-binding positions include 35–39, 84–85, and E116; these read DEAYD and SL. The active-site N6-AMP-lysine intermediate is K118. The NAD(+) site is built by R139, E180, K296, and K320. Positions 414, 417, 432, and 437 each coordinate Zn(2+). Residues 597 to 675 form the BRCT domain; that stretch reads PVDAFWNGKT…EREFLERLGM (79 aa).

The protein belongs to the NAD-dependent DNA ligase family. LigA subfamily. It depends on Mg(2+) as a cofactor. Mn(2+) serves as cofactor.

It carries out the reaction NAD(+) + (deoxyribonucleotide)n-3'-hydroxyl + 5'-phospho-(deoxyribonucleotide)m = (deoxyribonucleotide)n+m + AMP + beta-nicotinamide D-nucleotide.. Its function is as follows. DNA ligase that catalyzes the formation of phosphodiester linkages between 5'-phosphoryl and 3'-hydroxyl groups in double-stranded DNA using NAD as a coenzyme and as the energy source for the reaction. It is essential for DNA replication and repair of damaged DNA. The sequence is that of DNA ligase from Syntrophobacter fumaroxidans (strain DSM 10017 / MPOB).